The sequence spans 110 residues: BET1-like protein (110 aa).

Over 1-85 (MADPWNRGHG…MVRSGRDNRK (85 aa)) the chain is Cytoplasmic. In terms of domain architecture, t-SNARE coiled-coil homology spans 14–76 (DMLDAENKRM…TGSVKRFSTM (63 aa)). Residues 86-106 (ILCYVSVGLVVAFFLLYYLVS) traverse the membrane as a helical; Anchor for type IV membrane protein segment. Topologically, residues 107 to 110 (RMQN) are lumenal.

As to quaternary structure, component of a SNARE complex consisting of stx5, ykt6, gosr2 and bet1l.

The protein resides in the golgi apparatus membrane. Its function is as follows. Vesicle SNARE required for targeting and fusion of retrograde transport vesicles with the Golgi complex. Required for the integrity of the Golgi complex. This chain is BET1-like protein (bet1l), found in Danio rerio (Zebrafish).